The chain runs to 117 residues: Probable non-functional immunoglobulin heavy variable 1-38-4 (117 aa).

An N-terminal signal peptide occupies residues 1 to 19; it reads MDWNWRILFLVVATTGAHS. The interval 20 to 44 is framework-1; it reads QVQLVQSWAEVRKSGASVKVSCSFS. In terms of domain architecture, Ig-like spans 20–117; sequence QVQLVQSWAE…EDMAVYYYAR (98 aa). The complementarity-determining-1 stretch occupies residues 45-52; it reads GFTITSYG. The framework-2 stretch occupies residues 53–69; sequence IHWVQQSPGQGLEWMGW. A complementarity-determining-2 region spans residues 70 to 77; it reads INPGNGSP. The N-linked (GlcNAc...) asparagine glycan is linked to Asn74. The interval 78–115 is framework-3; that stretch reads SYAKKFQGRFTMTRDMSTTTAYTDLSSLTSEDMAVYYY. Residues 116-117 form a complementarity-determining-3 region; it reads AR.

Most probably, the immunoglobulin is not assembled due to incorrect folding of heavy chain. Immunoglobulins are composed of two identical heavy chains and two identical light chains; disulfide-linked.

It is found in the secreted. It localises to the cell membrane. Its function is as follows. Probable non-functional open reading frame (ORF) of V region of the variable domain of immunoglobulin heavy chains. Non-functional ORF generally cannot participate in the synthesis of a productive immunoglobulin chain due to altered V-(D)-J or switch recombination and/or splicing site (at mRNA level) and/or conserved amino acid change (protein level). Immunoglobulins, also known as antibodies, are membrane-bound or secreted glycoproteins produced by B lymphocytes. In the recognition phase of humoral immunity, the membrane-bound immunoglobulins serve as receptors which, upon binding of a specific antigen, trigger the clonal expansion and differentiation of B lymphocytes into immunoglobulins-secreting plasma cells. Secreted immunoglobulins mediate the effector phase of humoral immunity, which results in the elimination of bound antigens. The antigen binding site is formed by the variable domain of one heavy chain, together with that of its associated light chain. Thus, each immunoglobulin has two antigen binding sites with remarkable affinity for a particular antigen. The variable domains are assembled by a process called V-(D)-J rearrangement and can then be subjected to somatic hypermutations which, after exposure to antigen and selection, allow affinity maturation for a particular antigen. This chain is Probable non-functional immunoglobulin heavy variable 1-38-4, found in Homo sapiens (Human).